The primary structure comprises 265 residues: Cell division protein DivIB (265 aa).

Over 1–30 the chain is Cytoplasmic; it reads MKNSKVIKLQDRVPKLKNQQKKKKKNVNHR. The helical transmembrane segment at 31-51 threads the bilayer; sequence LILYISILFLLVLFLIYFRSP. At 52-265 the chain is on the extracellular side; the sequence is LSNIKKISVF…NRMIVFNTLS (214 aa). The POTRA domain occupies 53–121; that stretch reads SNIKKISVFG…NKIDVHIEEY (69 aa).

This sequence belongs to the FtsQ/DivIB family. DivIB subfamily.

It localises to the cell membrane. Its function is as follows. Cell division protein that may be involved in stabilizing or promoting the assembly of the division complex. This is Cell division protein DivIB from Bacillus anthracis.